Here is an 88-residue protein sequence, read N- to C-terminus: Small ribosomal subunit protein uS15 (88 aa).

It belongs to the universal ribosomal protein uS15 family. Part of the 30S ribosomal subunit. Forms a bridge to the 50S subunit in the 70S ribosome, contacting the 23S rRNA.

Its function is as follows. One of the primary rRNA binding proteins, it binds directly to 16S rRNA where it helps nucleate assembly of the platform of the 30S subunit by binding and bridging several RNA helices of the 16S rRNA. In terms of biological role, forms an intersubunit bridge (bridge B4) with the 23S rRNA of the 50S subunit in the ribosome. The sequence is that of Small ribosomal subunit protein uS15 from Mesomycoplasma hyopneumoniae (strain 232) (Mycoplasma hyopneumoniae).